We begin with the raw amino-acid sequence, 844 residues long: Beta-mannosidase B (844 aa).

Catalysis depends on Glu432, which acts as the Proton donor. Residue Asn723 is glycosylated (N-linked (GlcNAc...) asparagine).

Belongs to the glycosyl hydrolase 2 family. Beta-mannosidase B subfamily.

It catalyses the reaction Hydrolysis of terminal, non-reducing beta-D-mannose residues in beta-D-mannosides.. It functions in the pathway glycan metabolism; N-glycan degradation. In terms of biological role, exoglycosidase that cleaves the single beta-linked mannose residue from the non-reducing end of beta-mannosidic oligosaccharides of various complexity and length. Prefers mannobiose over mannotriose and has no activity against polymeric mannan. Is also severely restricted by galactosyl substitutions at the +1 subsite. This Aspergillus niger (strain ATCC MYA-4892 / CBS 513.88 / FGSC A1513) protein is Beta-mannosidase B (mndB).